Consider the following 279-residue polypeptide: Oxygen-dependent coproporphyrinogen-III oxidase (279 aa).

Position 102 (serine 102) interacts with substrate. 2 residues coordinate a divalent metal cation: histidine 106 and histidine 116. The Proton donor role is filled by histidine 116. Asparagine 118–arginine 120 provides a ligand contact to substrate. Residues histidine 149 and histidine 179 each coordinate a divalent metal cation. The segment at tyrosine 244–asparagine 279 is important for dimerization.

Belongs to the aerobic coproporphyrinogen-III oxidase family. In terms of assembly, homodimer. Requires a divalent metal cation as cofactor.

It localises to the cytoplasm. It carries out the reaction coproporphyrinogen III + O2 + 2 H(+) = protoporphyrinogen IX + 2 CO2 + 2 H2O. The protein operates within porphyrin-containing compound metabolism; protoporphyrin-IX biosynthesis; protoporphyrinogen-IX from coproporphyrinogen-III (O2 route): step 1/1. Involved in the heme biosynthesis. Catalyzes the aerobic oxidative decarboxylation of propionate groups of rings A and B of coproporphyrinogen-III to yield the vinyl groups in protoporphyrinogen-IX. This Rickettsia felis (strain ATCC VR-1525 / URRWXCal2) (Rickettsia azadi) protein is Oxygen-dependent coproporphyrinogen-III oxidase.